The sequence spans 380 residues: Adaptive-response sensory kinase SasA (380 aa).

Residues 20 to 101 (LLFVANRPGD…QKVDYWWPRW (82 aa)) form a kaiB-like domain, interacts with KaiC region. A Histidine kinase domain is found at 157–380 (LLAHELRNPL…CFHFTLPVYS (224 aa)). His-160 carries the phosphohistidine; by autocatalysis modification.

In terms of assembly, homotrimer with a small amount of possible homohexamer; a protein fragment of 109-380 is also a homotrimer. Interacts with KaiC, probably as 1 SasA trimer:1 KaiC homohexamer; unphosphorylated SasA has the highest affinity. Homodimer. Binds to the B-loop in the CI domain of KaiC; SasA and KaiB(fs) compete to bind to the CI domain. Binds preferentially to doubly phosphorylated KaiC. Autophosphorylates, probably on His-160.

It catalyses the reaction ATP + protein L-histidine = ADP + protein N-phospho-L-histidine.. Functionally, member of the two-component regulatory system SasA/RpaA involved in genome-wide circadian gene expression. One of several clock output pathways. Participates in the Kai clock protein complex, the main circadian regulator in cyanobacteria, via its interaction with KaiC. KaiC enhances the autophosphorylation activity of SasA, which then transfers its phosphate group to RpaA to activate it. In addition to its output function, recruits fold-shifted KaiB (KaiB(fs)) to KaiC to cooperatively form the KaiB(6):KaiC(6) complex (independent of SasA kinase activity). Required for robustness of the circadian rhythm of gene expression and is involved in clock output, also required for adaptation to light/dark cycles. The chain is Adaptive-response sensory kinase SasA from Thermosynechococcus vestitus (strain NIES-2133 / IAM M-273 / BP-1).